A 488-amino-acid polypeptide reads, in one-letter code: ATP-dependent RNA helicase dbp3 (488 aa).

Residues methionine 1–threonine 29 show a composition bias toward basic and acidic residues. The segment at methionine 1–aspartate 42 is disordered. Residues glycine 92–glutamine 100 carry the Q motif motif. The 176-residue stretch at tryptophan 104–valine 279 folds into the Helicase ATP-binding domain. Alanine 117–threonine 124 contacts ATP. A DEAD box motif is present at residues aspartate 226–aspartate 229. The Helicase C-terminal domain maps to glutamate 306–glycine 457.

It belongs to the DEAD box helicase family. DDX5/DBP2 subfamily.

It localises to the nucleus. It is found in the nucleolus. The enzyme catalyses ATP + H2O = ADP + phosphate + H(+). In terms of biological role, ATP-dependent RNA helicase required for 60S ribosomal subunit synthesis. Involved in efficient pre-rRNA processing, predominantly at site A3, which is necessary for the normal formation of 25S and 5.8S rRNAs. The protein is ATP-dependent RNA helicase dbp3 (dbp3) of Emericella nidulans (strain FGSC A4 / ATCC 38163 / CBS 112.46 / NRRL 194 / M139) (Aspergillus nidulans).